We begin with the raw amino-acid sequence, 1435 residues long: Gag-Pol polyprotein (1435 aa).

A lipid anchor (N-myristoyl glycine; by host) is attached at G2. Residues V7–L31 form an interaction with Gp41 region. Residues L8–R43 are interaction with host CALM1. Residues K12 to I19 are interaction with host AP3D1. The interval D14–H33 is interaction with membrane phosphatidylinositol 4,5-bisphosphate and RNA. The short motif at W16–K22 is the Nuclear export signal element. Residues K26–K32 carry the Nuclear localization signal motif. The interval D73–S77 is interaction with membrane phosphatidylinositol 4,5-bisphosphate. Position 130 is a phosphotyrosine; by host (Y130). Residues N187 to Q225 are interaction with human PPIA/CYPA and NUP153. The tract at residues R212–S232 is disordered. The tract at residues Y276 to L362 is dimerization/Multimerization of capsid protein p24. 2 CCHC-type zinc fingers span residues I394–A411 and K415–N432. Positions T455–E480 are disordered. A compositionally biased stretch (gly residues) spans D463–E472. The segment at P488–L492 is dimerization of protease. The Peptidase A2 domain occupies C507 to I576. The active-site For protease activity; shared with dimeric partner is the D512. 2 dimerization of protease regions span residues G536–K542 and N575–P587. The Reverse transcriptase domain occupies E630–L820. Positions 696, 771, and 772 each coordinate Mg(2+). The interval F813–H821 is RT 'primer grip'. The Tryptophan repeat motif signature appears at W984–W1000. In terms of domain architecture, RNase H type-1 spans I1020–R1143. The Mg(2+) site is built by D1029, E1064, D1084, and D1135. An Integrase-type zinc finger spans residues E1149 to H1190. The Zn(2+) site is built by H1158, H1162, C1186, and C1189. The Integrase catalytic domain occupies V1200 to L1350. Residues D1210, D1262, and E1298 each coordinate Mg(2+). Residues F1369–E1416 constitute a DNA-binding region (integrase-type).

Homotrimer; further assembles as hexamers of trimers. Interacts with gp41 (via C-terminus). Interacts with host CALM1; this interaction induces a conformational change in the Matrix protein, triggering exposure of the myristate group. Interacts with host AP3D1; this interaction allows the polyprotein trafficking to multivesicular bodies during virus assembly. Part of the pre-integration complex (PIC) which is composed of viral genome, matrix protein, Vpr and integrase. In terms of assembly, homodimer; the homodimer further multimerizes as homohexamers or homopentamers. Interacts with human PPIA/CYPA; This interaction stabilizes the capsid. Interacts with human NUP153. Interacts with host PDZD8; this interaction stabilizes the capsid. Interacts with monkey TRIM5; this interaction destabilizes the capsid. As to quaternary structure, homodimer, whose active site consists of two apposed aspartic acid residues. Heterodimer of p66 RT and p51 RT (RT p66/p51). Heterodimerization of RT is essential for DNA polymerase activity. The overall folding of the subdomains is similar in p66 RT and p51 RT but the spatial arrangements of the subdomains are dramatically different. In terms of assembly, homotetramer; may further associate as a homohexadecamer. Part of the pre-integration complex (PIC) which is composed of viral genome, matrix protein, Vpr and integrase. Interacts with human SMARCB1/INI1 and human PSIP1/LEDGF isoform 1. Interacts with human KPNA3; this interaction might play a role in nuclear import of the pre-integration complex. Interacts with human NUP153; this interaction might play a role in nuclear import of the pre-integration complex. Requires Mg(2+) as cofactor. Specific enzymatic cleavages by the viral protease yield mature proteins. The protease is released by autocatalytic cleavage. The polyprotein is cleaved during and after budding, this process is termed maturation. Proteolytic cleavage of p66 RT removes the RNase H domain to yield the p51 RT subunit. Nucleocapsid protein p7 might be further cleaved after virus entry. Post-translationally, tyrosine phosphorylated presumably in the virion by a host kinase. Phosphorylation is apparently not a major regulator of membrane association. In terms of processing, phosphorylated possibly by host MAPK1; this phosphorylation is necessary for Pin1-mediated virion uncoating. Methylated by host PRMT6, impairing its function by reducing RNA annealing and the initiation of reverse transcription.

It is found in the host cell membrane. The protein resides in the host endosome. Its subcellular location is the host multivesicular body. The protein localises to the virion membrane. It localises to the host nucleus. It is found in the host cytoplasm. The protein resides in the virion. It catalyses the reaction Specific for a P1 residue that is hydrophobic, and P1' variable, but often Pro.. The enzyme catalyses Endohydrolysis of RNA in RNA/DNA hybrids. Three different cleavage modes: 1. sequence-specific internal cleavage of RNA. Human immunodeficiency virus type 1 and Moloney murine leukemia virus enzymes prefer to cleave the RNA strand one nucleotide away from the RNA-DNA junction. 2. RNA 5'-end directed cleavage 13-19 nucleotides from the RNA end. 3. DNA 3'-end directed cleavage 15-20 nucleotides away from the primer terminus.. It carries out the reaction 3'-end directed exonucleolytic cleavage of viral RNA-DNA hybrid.. The catalysed reaction is DNA(n) + a 2'-deoxyribonucleoside 5'-triphosphate = DNA(n+1) + diphosphate. Its activity is regulated as follows. Protease: The viral protease is inhibited by many synthetic protease inhibitors (PIs), such as amprenavir, atazanavir, indinavir, loprinavir, nelfinavir, ritonavir and saquinavir. Use of protease inhibitors in tritherapy regimens permit more ambitious therapeutic strategies. Reverse transcriptase/ribonuclease H: RT can be inhibited either by nucleoside RT inhibitors (NRTIs) or by non nucleoside RT inhibitors (NNRTIs). NRTIs act as chain terminators, whereas NNRTIs inhibit DNA polymerization by binding a small hydrophobic pocket near the RT active site and inducing an allosteric change in this region. Classical NRTIs are abacavir, adefovir (PMEA), didanosine (ddI), lamivudine (3TC), stavudine (d4T), tenofovir (PMPA), zalcitabine (ddC), and zidovudine (AZT). Classical NNRTIs are atevirdine (BHAP U-87201E), delavirdine, efavirenz (DMP-266), emivirine (I-EBU), and nevirapine (BI-RG-587). The tritherapies used as a basic effective treatment of AIDS associate two NRTIs and one NNRTI. Its function is as follows. Mediates, with Gag polyprotein, the essential events in virion assembly, including binding the plasma membrane, making the protein-protein interactions necessary to create spherical particles, recruiting the viral Env proteins, and packaging the genomic RNA via direct interactions with the RNA packaging sequence (Psi). Gag-Pol polyprotein may regulate its own translation, by the binding genomic RNA in the 5'-UTR. At low concentration, the polyprotein would promote translation, whereas at high concentration, the polyprotein would encapsidate genomic RNA and then shut off translation. Functionally, targets the polyprotein to the plasma membrane via a multipartite membrane-binding signal, that includes its myristoylated N-terminus. Matrix protein is part of the pre-integration complex. Implicated in the release from host cell mediated by Vpu. Binds to RNA. Forms the conical core that encapsulates the genomic RNA-nucleocapsid complex in the virion. Most core are conical, with only 7% tubular. The core is constituted by capsid protein hexamer subunits. The core is disassembled soon after virion entry. Host restriction factors such as TRIM5-alpha or TRIMCyp bind retroviral capsids and cause premature capsid disassembly, leading to blocks in reverse transcription. Capsid restriction by TRIM5 is one of the factors which restricts HIV-1 to the human species. Host PIN1 apparently facilitates the virion uncoating. On the other hand, interactions with PDZD8 or CYPA stabilize the capsid. In terms of biological role, encapsulates and protects viral dimeric unspliced genomic RNA (gRNA). Binds these RNAs through its zinc fingers. Acts as a nucleic acid chaperone which is involved in rearangement of nucleic acid secondary structure during gRNA retrotranscription. Also facilitates template switch leading to recombination. As part of the polyprotein, participates in gRNA dimerization, packaging, tRNA incorporation and virion assembly. Its function is as follows. Aspartyl protease that mediates proteolytic cleavages of Gag and Gag-Pol polyproteins during or shortly after the release of the virion from the plasma membrane. Cleavages take place as an ordered, step-wise cascade to yield mature proteins. This process is called maturation. Displays maximal activity during the budding process just prior to particle release from the cell. Also cleaves Nef and Vif, probably concomitantly with viral structural proteins on maturation of virus particles. Hydrolyzes host EIF4GI and PABP1 in order to shut off the capped cellular mRNA translation. The resulting inhibition of cellular protein synthesis serves to ensure maximal viral gene expression and to evade host immune response. Also mediates cleavage of host YTHDF3. Mediates cleavage of host CARD8, thereby activating the CARD8 inflammasome, leading to the clearance of latent HIV-1 in patient CD4(+) T-cells after viral reactivation; in contrast, HIV-1 can evade CARD8-sensing when its protease remains inactive in infected cells prior to viral budding. Functionally, multifunctional enzyme that converts the viral RNA genome into dsDNA in the cytoplasm, shortly after virus entry into the cell. This enzyme displays a DNA polymerase activity that can copy either DNA or RNA templates, and a ribonuclease H (RNase H) activity that cleaves the RNA strand of RNA-DNA heteroduplexes in a partially processive 3' to 5' endonucleasic mode. Conversion of viral genomic RNA into dsDNA requires many steps. A tRNA(3)-Lys binds to the primer-binding site (PBS) situated at the 5'-end of the viral RNA. RT uses the 3' end of the tRNA primer to perform a short round of RNA-dependent minus-strand DNA synthesis. The reading proceeds through the U5 region and ends after the repeated (R) region which is present at both ends of viral RNA. The portion of the RNA-DNA heteroduplex is digested by the RNase H, resulting in a ssDNA product attached to the tRNA primer. This ssDNA/tRNA hybridizes with the identical R region situated at the 3' end of viral RNA. This template exchange, known as minus-strand DNA strong stop transfer, can be either intra- or intermolecular. RT uses the 3' end of this newly synthesized short ssDNA to perform the RNA-dependent minus-strand DNA synthesis of the whole template. RNase H digests the RNA template except for two polypurine tracts (PPTs) situated at the 5'-end and near the center of the genome. It is not clear if both polymerase and RNase H activities are simultaneous. RNase H probably can proceed both in a polymerase-dependent (RNA cut into small fragments by the same RT performing DNA synthesis) and a polymerase-independent mode (cleavage of remaining RNA fragments by free RTs). Secondly, RT performs DNA-directed plus-strand DNA synthesis using the PPTs that have not been removed by RNase H as primers. PPTs and tRNA primers are then removed by RNase H. The 3' and 5' ssDNA PBS regions hybridize to form a circular dsDNA intermediate. Strand displacement synthesis by RT to the PBS and PPT ends produces a blunt ended, linear dsDNA copy of the viral genome that includes long terminal repeats (LTRs) at both ends. Catalyzes viral DNA integration into the host chromosome, by performing a series of DNA cutting and joining reactions. This enzyme activity takes place after virion entry into a cell and reverse transcription of the RNA genome in dsDNA. The first step in the integration process is 3' processing. This step requires a complex comprising the viral genome, matrix protein, Vpr and integrase. This complex is called the pre-integration complex (PIC). The integrase protein removes 2 nucleotides from each 3' end of the viral DNA, leaving recessed CA OH's at the 3' ends. In the second step, the PIC enters cell nucleus. This process is mediated through integrase and Vpr proteins, and allows the virus to infect a non dividing cell. This ability to enter the nucleus is specific of lentiviruses, other retroviruses cannot and rely on cell division to access cell chromosomes. In the third step, termed strand transfer, the integrase protein joins the previously processed 3' ends to the 5' ends of strands of target cellular DNA at the site of integration. The 5'-ends are produced by integrase-catalyzed staggered cuts, 5 bp apart. A Y-shaped, gapped, recombination intermediate results, with the 5'-ends of the viral DNA strands and the 3' ends of target DNA strands remaining unjoined, flanking a gap of 5 bp. The last step is viral DNA integration into host chromosome. This involves host DNA repair synthesis in which the 5 bp gaps between the unjoined strands are filled in and then ligated. Since this process occurs at both cuts flanking the HIV genome, a 5 bp duplication of host DNA is produced at the ends of HIV-1 integration. Alternatively, Integrase may catalyze the excision of viral DNA just after strand transfer, this is termed disintegration. This chain is Gag-Pol polyprotein (gag-pol), found in Human immunodeficiency virus type 1 group O (isolate ANT70) (HIV-1).